The sequence spans 321 residues: Malate dehydrogenase (321 aa).

NAD(+) is bound by residues Gly10–Gly15 and Asp34. Residues Arg83 and Arg89 each coordinate substrate. NAD(+) is bound by residues Asn96 and Ile119–Asn121. Substrate contacts are provided by Asn121 and Arg152. The Proton acceptor role is filled by His176.

Belongs to the LDH/MDH superfamily. MDH type 3 family.

It carries out the reaction (S)-malate + NAD(+) = oxaloacetate + NADH + H(+). In terms of biological role, catalyzes the reversible oxidation of malate to oxaloacetate. The polypeptide is Malate dehydrogenase (Methylocella silvestris (strain DSM 15510 / CIP 108128 / LMG 27833 / NCIMB 13906 / BL2)).